A 218-amino-acid chain; its full sequence is Small ribosomal subunit protein uS4 (218 aa).

Residues 111–175 enclose the S4 RNA-binding domain; the sequence is RRLQTQVLRL…SPLKNESHPE (65 aa). A disordered region spans residues 192–218; it reads KAAAEAKQAREKPPERGGGRRKRGGRR. Basic and acidic residues predominate over residues 198 to 209; sequence KQAREKPPERGG.

The protein belongs to the universal ribosomal protein uS4 family. Part of the 30S ribosomal subunit. Contacts protein S5. The interaction surface between S4 and S5 is involved in control of translational fidelity.

One of the primary rRNA binding proteins, it binds directly to 16S rRNA where it nucleates assembly of the body of the 30S subunit. Its function is as follows. With S5 and S12 plays an important role in translational accuracy. This Methanosarcina acetivorans (strain ATCC 35395 / DSM 2834 / JCM 12185 / C2A) protein is Small ribosomal subunit protein uS4.